Here is a 170-residue protein sequence, read N- to C-terminus: Transcription factor E (170 aa).

An HTH TFE/IIEalpha-type domain is found at 1–93; the sequence is MKEAYLYIVE…TWYVDDDVIR (93 aa).

This sequence belongs to the TFE family. In terms of assembly, monomer. Interaction with RNA polymerase subunits RpoF and RpoE is necessary for Tfe stimulatory transcription activity. Able to interact with Tbp and RNA polymerase in the absence of DNA promoter. Interacts both with the preinitiation and elongation complexes.

In terms of biological role, transcription factor that plays a role in the activation of archaeal genes transcribed by RNA polymerase. Facilitates transcription initiation by enhancing TATA-box recognition by TATA-box-binding protein (Tbp), and transcription factor B (Tfb) and RNA polymerase recruitment. Not absolutely required for transcription in vitro, but particularly important in cases where Tbp or Tfb function is not optimal. It dynamically alters the nucleic acid-binding properties of RNA polymerases by stabilizing the initiation complex and destabilizing elongation complexes. Seems to translocate with the RNA polymerase following initiation and acts by binding to the non template strand of the transcription bubble in elongation complexes. This Pyrobaculum neutrophilum (strain DSM 2338 / JCM 9278 / NBRC 100436 / V24Sta) (Thermoproteus neutrophilus) protein is Transcription factor E.